The chain runs to 113 residues: Large ribosomal subunit protein uL22 (113 aa).

Belongs to the universal ribosomal protein uL22 family. Part of the 50S ribosomal subunit.

Functionally, this protein binds specifically to 23S rRNA; its binding is stimulated by other ribosomal proteins, e.g. L4, L17, and L20. It is important during the early stages of 50S assembly. It makes multiple contacts with different domains of the 23S rRNA in the assembled 50S subunit and ribosome. The globular domain of the protein is located near the polypeptide exit tunnel on the outside of the subunit, while an extended beta-hairpin is found that lines the wall of the exit tunnel in the center of the 70S ribosome. This chain is Large ribosomal subunit protein uL22, found in Neorickettsia sennetsu (strain ATCC VR-367 / Miyayama) (Ehrlichia sennetsu).